Here is a 422-residue protein sequence, read N- to C-terminus: Multifunctional CCA protein (422 aa).

ATP is bound by residues G8 and R11. Residues G8 and R11 each contribute to the CTP site. Mg(2+)-binding residues include D21 and D23. R91, R137, and R140 together coordinate ATP. 3 residues coordinate CTP: R91, R137, and R140. The region spanning 228–329 is the HD domain; that stretch reads TGLHSLMALE…VKLLQSCDAW (102 aa). Residues 403–422 are disordered; that stretch reads FKQDNAPEAQEKGGEDVGLT.

This sequence belongs to the tRNA nucleotidyltransferase/poly(A) polymerase family. Bacterial CCA-adding enzyme type 1 subfamily. In terms of assembly, monomer. Can also form homodimers and oligomers. It depends on Mg(2+) as a cofactor. The cofactor is Ni(2+).

The enzyme catalyses a tRNA precursor + 2 CTP + ATP = a tRNA with a 3' CCA end + 3 diphosphate. It catalyses the reaction a tRNA with a 3' CCA end + 2 CTP + ATP = a tRNA with a 3' CCACCA end + 3 diphosphate. Its function is as follows. Catalyzes the addition and repair of the essential 3'-terminal CCA sequence in tRNAs without using a nucleic acid template. Adds these three nucleotides in the order of C, C, and A to the tRNA nucleotide-73, using CTP and ATP as substrates and producing inorganic pyrophosphate. tRNA 3'-terminal CCA addition is required both for tRNA processing and repair. Also involved in tRNA surveillance by mediating tandem CCA addition to generate a CCACCA at the 3' terminus of unstable tRNAs. While stable tRNAs receive only 3'-terminal CCA, unstable tRNAs are marked with CCACCA and rapidly degraded. The sequence is that of Multifunctional CCA protein from Hahella chejuensis (strain KCTC 2396).